The sequence spans 187 residues: Elongation factor P (187 aa).

It belongs to the elongation factor P family.

The protein resides in the cytoplasm. The protein operates within protein biosynthesis; polypeptide chain elongation. In terms of biological role, involved in peptide bond synthesis. Stimulates efficient translation and peptide-bond synthesis on native or reconstituted 70S ribosomes in vitro. Probably functions indirectly by altering the affinity of the ribosome for aminoacyl-tRNA, thus increasing their reactivity as acceptors for peptidyl transferase. The chain is Elongation factor P from Arthrobacter sp. (strain FB24).